A 147-amino-acid chain; its full sequence is uncharacterized protein (147 aa).

Belongs to the RTX toxin acyltransferase family.

This is an uncharacterized protein from Synechocystis sp. (strain ATCC 27184 / PCC 6803 / Kazusa).